Here is a 244-residue protein sequence, read N- to C-terminus: Phosphate propanoyltransferase (244 aa).

Residue 52 to 54 participates in CoA binding; the sequence is ISA. Zn(2+) contacts are provided by histidine 56 and histidine 58. Arginine 106 lines the CoA pocket. A phosphate-binding site is contributed by arginine 112. Zn(2+) contacts are provided by glutamate 118, histidine 166, histidine 168, and histidine 214. Asparagine 221 provides a ligand contact to CoA.

It belongs to the PduL family. Full-length protein forms large oligomers. Possible homotrimer and monomer, when purified in the absence of the encapsulation peptide (EP, residues 1-20). The EP may influence oligomerization. Zn(2+) is required as a cofactor.

Its subcellular location is the bacterial microcompartment. It carries out the reaction propanoyl-CoA + phosphate = propanoyl phosphate + CoA. In terms of biological role, part of a bacterial microcompartment (BMC) locus required for growth on plant and algal sugars, including L-fucose and L-rhamnose. Thought to be active on lactyl-CoA in a lactaldehyde-degradation pathway. CoA is regenerated within the BMC via this enzyme, although there must also be cofactor transport across the BMC. Directly targeted to the BMC. This is Phosphate propanoyltransferase from Planctopirus limnophila (strain ATCC 43296 / DSM 3776 / IFAM 1008 / Mu 290) (Planctomyces limnophilus).